The primary structure comprises 585 residues: Type IV pilus assembly ATPase TfpB (585 aa).

346–351 (GSGKTT) is an ATP binding site. Zn(2+) contacts are provided by C476, C479, C511, and C514.

This sequence belongs to the GSP E family.

Its subcellular location is the cytoplasm. ATPase component of the type IV pilus (T4P). Acts as a molecular motor to provide the energy that is required for biogenesis of the pilus and the extrusion of substrates generated in the cytoplasm. TfpB is required for optimal T4P extension and, consequently, efficient natural transformation. May play a role in initiating T4P extension. This is Type IV pilus assembly ATPase TfpB from Acinetobacter baylyi (strain ATCC 33305 / BD413 / ADP1).